Consider the following 805-residue polypeptide: Sucrose synthase (805 aa).

Residues 275–752 (MVFNVVILSP…GLKRIQEKYT (478 aa)) are GT-B glycosyltransferase.

It belongs to the glycosyltransferase 1 family. Plant sucrose synthase subfamily.

It carries out the reaction an NDP-alpha-D-glucose + D-fructose = a ribonucleoside 5'-diphosphate + sucrose + H(+). Its function is as follows. Sucrose-cleaving enzyme that provides UDP-glucose and fructose for various metabolic pathways. The chain is Sucrose synthase from Solanum tuberosum (Potato).